The chain runs to 593 residues: Uncoordinated protein 58 (593 aa).

Transmembrane regions (helical) follow at residues 186 to 206, 291 to 311, 320 to 340, 402 to 422, 430 to 450, and 455 to 475; these read VILV…LMLL, TFPT…YGEV, VFSV…AADI, PIGA…AMFI, FIHA…GDIV, and IFLS…TMCV.

This sequence belongs to the two pore domain potassium channel (TC 1.A.1.8) family.

The protein localises to the membrane. Functionally, has a role in mobility, possibly in the transport of potassium in muscles. The protein is Uncoordinated protein 58 of Caenorhabditis briggsae.